The following is a 117-amino-acid chain: Large ribosomal subunit protein uL18 (117 aa).

Belongs to the universal ribosomal protein uL18 family. As to quaternary structure, part of the 50S ribosomal subunit; part of the 5S rRNA/L5/L18/L25 subcomplex. Contacts the 5S and 23S rRNAs.

This is one of the proteins that bind and probably mediate the attachment of the 5S RNA into the large ribosomal subunit, where it forms part of the central protuberance. The polypeptide is Large ribosomal subunit protein uL18 (Thiobacillus denitrificans (strain ATCC 25259 / T1)).